Here is a 719-residue protein sequence, read N- to C-terminus: B3 domain-containing protein Os03g0120900 (719 aa).

A DNA-binding region (TF-B3) is located at residues 7–110; the sequence is HHHFIKVMVG…HFMVLPFGLN (104 aa). Disordered regions lie at residues 328–381 and 412–443; these read RGSF…RSEQ and EEPQHNQGENEGNLDQVNNKETDEEQIERNAV. The segment covering 351-366 has biased composition (basic and acidic residues); sequence DSAENTLKERSEERQP. Over residues 416–430 the composition is skewed to polar residues; that stretch reads HNQGENEGNLDQVNN.

Its subcellular location is the nucleus. This Oryza sativa subsp. japonica (Rice) protein is B3 domain-containing protein Os03g0120900.